The sequence spans 560 residues: Formate--tetrahydrofolate ligase (560 aa).

Residue 69–76 (TPAGEGKS) participates in ATP binding.

This sequence belongs to the formate--tetrahydrofolate ligase family.

It catalyses the reaction (6S)-5,6,7,8-tetrahydrofolate + formate + ATP = (6R)-10-formyltetrahydrofolate + ADP + phosphate. It participates in one-carbon metabolism; tetrahydrofolate interconversion. This is Formate--tetrahydrofolate ligase from Listeria innocua serovar 6a (strain ATCC BAA-680 / CLIP 11262).